The primary structure comprises 623 residues: Methionine--tRNA ligase (623 aa).

The short motif at proline 11 to histidine 21 is the 'HIGH' region element. Cysteine 143, cysteine 146, cysteine 156, and cysteine 159 together coordinate Zn(2+). Positions lysine 347–serine 351 match the 'KMSKS' region motif. ATP is bound at residue serine 350.

Belongs to the class-I aminoacyl-tRNA synthetase family. MetG type 1 subfamily. In terms of assembly, monomer. Requires Zn(2+) as cofactor.

It is found in the cytoplasm. The catalysed reaction is tRNA(Met) + L-methionine + ATP = L-methionyl-tRNA(Met) + AMP + diphosphate. Its function is as follows. Is required not only for elongation of protein synthesis but also for the initiation of all mRNA translation through initiator tRNA(fMet) aminoacylation. The polypeptide is Methionine--tRNA ligase (Bifidobacterium animalis subsp. lactis (strain AD011)).